The sequence spans 202 residues: GTP cyclohydrolase 1 (202 aa).

Residues Cys90, His93, and Cys163 each contribute to the Zn(2+) site.

Belongs to the GTP cyclohydrolase I family. In terms of assembly, homomer.

It catalyses the reaction GTP + H2O = 7,8-dihydroneopterin 3'-triphosphate + formate + H(+). It functions in the pathway cofactor biosynthesis; 7,8-dihydroneopterin triphosphate biosynthesis; 7,8-dihydroneopterin triphosphate from GTP: step 1/1. The sequence is that of GTP cyclohydrolase 1 from Mycobacterium marinum (strain ATCC BAA-535 / M).